Consider the following 253-residue polypeptide: Retinoic acid early-inducible protein 1-beta (253 aa).

The N-terminal stretch at 1–28 (MAKAAVTKRHHFMIQKLLILLSYGYTNG) is a signal peptide. Cysteine 37 and cysteine 56 are oxidised to a cystine. N-linked (GlcNAc...) asparagine glycosylation is found at asparagine 38, asparagine 70, asparagine 83, asparagine 143, and asparagine 156. Cysteine 90 and cysteine 190 are disulfide-bonded. Residues 198 to 230 (LKQSKEKPRSTSRSPSITQLTSTSPLPPPSHST) form a disordered region. The segment covering 211-221 (SPSITQLTSTS) has biased composition (low complexity). The GPI-anchor amidated serine moiety is linked to residue serine 229. A propeptide spans 230 to 253 (TSKKGFISVGLIFISLLFAFAFAM) (removed in mature form).

Belongs to the NKG2D ligand family. Post-translationally, glycosylated. In terms of tissue distribution, expressed predominantly in embryonic brain.

Its subcellular location is the cell membrane. Functionally, acts as a ligand for KLRK1. This is Retinoic acid early-inducible protein 1-beta (Raet1b) from Mus musculus (Mouse).